The chain runs to 204 residues: MTTFLQRDDFAVTARVLGALFYYSPESHETAPLVQALLNDDWQAQWPLDAEALAPVAAMFKTHSEESLPQAWQRLFIGPYALPSPPWGSVWLDRESVLFGDSTLALRQWMRENGIQFEMQQNEPEDHFGSLLLLAAWLAENDRHHECEQLLAWHLFPWSSRFLDVFIDHAGHPFYQALGQLARLTLAQWQAQLIIPVAVKPLFR.

This sequence belongs to the TorD/DmsD family. DmsD subfamily. Monomer in solution.

Functionally, required for biogenesis/assembly of DMSO reductase, but not for the interaction of the DmsA signal peptide with the Tat system. May be part of a chaperone cascade complex that facilitates a folding-maturation pathway for the substrate protein. The protein is Tat proofreading chaperone DmsD of Salmonella typhimurium (strain LT2 / SGSC1412 / ATCC 700720).